Here is a 169-residue protein sequence, read N- to C-terminus: Endoribonuclease YbeY (169 aa).

Positions 130, 134, and 140 each coordinate Zn(2+).

This sequence belongs to the endoribonuclease YbeY family. It depends on Zn(2+) as a cofactor.

Its subcellular location is the cytoplasm. Single strand-specific metallo-endoribonuclease involved in late-stage 70S ribosome quality control and in maturation of the 3' terminus of the 16S rRNA. This is Endoribonuclease YbeY from Neisseria meningitidis serogroup B (strain ATCC BAA-335 / MC58).